Consider the following 246-residue polypeptide: FAD synthetase (246 aa).

Belongs to the RibF family.

The enzyme catalyses FMN + ATP + H(+) = FAD + diphosphate. Its pathway is cofactor biosynthesis; FAD biosynthesis; FAD from FMN: step 1/1. Functionally, catalyzes the adenylation of flavin mononucleotide (FMN) to form flavin adenine dinucleotide (FAD) coenzyme. Can also catalyze, with lower efficiency, the adenylation of the toxic riboflavin analogs 8-demethyl-8-aminoriboflavin mononucleotide (AFMN) and roseoflavin mononucleotide (RoFMN) to 8-demethyl-8-aminoriboflavin adenine dinucleotide (AFAD) and roseoflavin adenine dinucleotide (RoFAD), respectively. The protein is FAD synthetase of Listeria monocytogenes serovar 1/2a (strain ATCC BAA-679 / EGD-e).